A 327-amino-acid polypeptide reads, in one-letter code: Methionyl-tRNA formyltransferase (327 aa).

Ser-121–Pro-124 serves as a coordination point for (6S)-5,6,7,8-tetrahydrofolate.

The protein belongs to the Fmt family.

The enzyme catalyses L-methionyl-tRNA(fMet) + (6R)-10-formyltetrahydrofolate = N-formyl-L-methionyl-tRNA(fMet) + (6S)-5,6,7,8-tetrahydrofolate + H(+). Functionally, attaches a formyl group to the free amino group of methionyl-tRNA(fMet). The formyl group appears to play a dual role in the initiator identity of N-formylmethionyl-tRNA by promoting its recognition by IF2 and preventing the misappropriation of this tRNA by the elongation apparatus. The polypeptide is Methionyl-tRNA formyltransferase (Burkholderia pseudomallei (strain K96243)).